A 124-amino-acid chain; its full sequence is Glycine cleavage system H protein (124 aa).

The region spanning 22-104 (LVITGITDHA…YGKGWIYKIK (83 aa)) is the Lipoyl-binding domain. Position 63 is an N6-lipoyllysine (lysine 63).

The protein belongs to the GcvH family. The glycine cleavage system is composed of four proteins: P, T, L and H. (R)-lipoate is required as a cofactor.

Functionally, the glycine cleavage system catalyzes the degradation of glycine. The H protein shuttles the methylamine group of glycine from the P protein to the T protein. The chain is Glycine cleavage system H protein from Acinetobacter baumannii (strain ACICU).